A 103-amino-acid polypeptide reads, in one-letter code: Histone H4, minor (103 aa).

Positions 1–12 (MAGGKGGKGMGK) are enriched in gly residues. The interval 1–29 (MAGGKGGKGMGKVGAKRHSRKSNKASIEG) is disordered. N6-acetyllysine is present on residues Lys5, Lys8, Lys12, and Lys16. The span at 14 to 23 (GAKRHSRKSN) shows a compositional bias: basic residues. Residues 16 to 21 (KRHSRK) mediate DNA binding.

Belongs to the histone H4 family. As to quaternary structure, the nucleosome is a histone octamer containing two molecules each of H2A, H2B, H3 and H4 assembled in one H3-H4 heterotetramer and two H2A-H2B heterodimers. The octamer wraps approximately 147 bp of DNA.

The protein resides in the nucleus. Its subcellular location is the chromosome. Core component of nucleosome. Nucleosomes wrap and compact DNA into chromatin, limiting DNA accessibility to the cellular machineries which require DNA as a template. Histones thereby play a central role in transcription regulation, DNA repair, DNA replication and chromosomal stability. DNA accessibility is regulated via a complex set of post-translational modifications of histones, also called histone code, and nucleosome remodeling. This Tetrahymena pyriformis protein is Histone H4, minor.